We begin with the raw amino-acid sequence, 553 residues long: Coiled-coil domain-containing protein 22 homolog (553 aa).

Coiled coils occupy residues L261 to Q404 and N498 to A553.

It belongs to the CCDC22 family.

The polypeptide is Coiled-coil domain-containing protein 22 homolog (Drosophila pseudoobscura pseudoobscura (Fruit fly)).